A 112-amino-acid polypeptide reads, in one-letter code: NADH-quinone oxidoreductase subunit K (112 aa).

Helical transmembrane passes span 14-34 (LEGYLTVAAIMFAIGAWGALI), 39-59 (VVVFMCVELMINAVNLTLVAF), and 76-96 (LIIAIAAAEVAVGLAIVLAIF).

The protein belongs to the complex I subunit 4L family. As to quaternary structure, NDH-1 is composed of 14 different subunits. Subunits NuoA, H, J, K, L, M, N constitute the membrane sector of the complex.

The protein localises to the cell membrane. It catalyses the reaction a quinone + NADH + 5 H(+)(in) = a quinol + NAD(+) + 4 H(+)(out). Functionally, NDH-1 shuttles electrons from NADH, via FMN and iron-sulfur (Fe-S) centers, to quinones in the respiratory chain. The immediate electron acceptor for the enzyme in this species is believed to be a menaquinone. Couples the redox reaction to proton translocation (for every two electrons transferred, four hydrogen ions are translocated across the cytoplasmic membrane), and thus conserves the redox energy in a proton gradient. This is NADH-quinone oxidoreductase subunit K from Rubrobacter xylanophilus (strain DSM 9941 / JCM 11954 / NBRC 16129 / PRD-1).